The chain runs to 555 residues: Potassium-transporting ATPase potassium-binding subunit (555 aa).

The next 10 helical transmembrane spans lie at 2-22 (IWVA…PTGI), 60-80 (QYAL…YFIF), 130-150 (IGIT…VMAF), 173-193 (VFLP…VPQT), 246-266 (MSNI…PFTY), 278-298 (ILFV…TTSE), 374-394 (AGFV…GLMV), 412-432 (LIAV…ALAL), 483-503 (LVMF…AASL), and 525-545 (GIFI…MLVL).

This sequence belongs to the KdpA family. In terms of assembly, the system is composed of three essential subunits: KdpA, KdpB and KdpC.

It is found in the cell membrane. Part of the high-affinity ATP-driven potassium transport (or Kdp) system, which catalyzes the hydrolysis of ATP coupled with the electrogenic transport of potassium into the cytoplasm. This subunit binds the extracellular potassium ions and delivers the ions to the membrane domain of KdpB through an intramembrane tunnel. The protein is Potassium-transporting ATPase potassium-binding subunit of Bacillus cereus (strain ZK / E33L).